We begin with the raw amino-acid sequence, 424 residues long: Glutamate-1-semialdehyde 2,1-aminomutase (424 aa).

Lys-263 bears the N6-(pyridoxal phosphate)lysine mark.

This sequence belongs to the class-III pyridoxal-phosphate-dependent aminotransferase family. HemL subfamily. As to quaternary structure, homodimer. Pyridoxal 5'-phosphate is required as a cofactor.

Its subcellular location is the cytoplasm. It catalyses the reaction (S)-4-amino-5-oxopentanoate = 5-aminolevulinate. It participates in porphyrin-containing compound metabolism; protoporphyrin-IX biosynthesis; 5-aminolevulinate from L-glutamyl-tRNA(Glu): step 2/2. The chain is Glutamate-1-semialdehyde 2,1-aminomutase from Campylobacter jejuni subsp. jejuni serotype O:2 (strain ATCC 700819 / NCTC 11168).